The sequence spans 163 residues: Putative pre-16S rRNA nuclease (163 aa).

Belongs to the YqgF nuclease family.

The protein localises to the cytoplasm. Its function is as follows. Could be a nuclease involved in processing of the 5'-end of pre-16S rRNA. This chain is Putative pre-16S rRNA nuclease, found in Roseobacter denitrificans (strain ATCC 33942 / OCh 114) (Erythrobacter sp. (strain OCh 114)).